A 192-amino-acid chain; its full sequence is Photosystem I assembly protein Ycf4 (192 aa).

Helical transmembrane passes span 30-52 (YFWA…SSYL) and 72-94 (IAIG…AIAW).

This sequence belongs to the Ycf4 family.

Its subcellular location is the cellular thylakoid membrane. Its function is as follows. Seems to be required for the assembly of the photosystem I complex. The protein is Photosystem I assembly protein Ycf4 of Thermosynechococcus vestitus (strain NIES-2133 / IAM M-273 / BP-1).